We begin with the raw amino-acid sequence, 138 residues long: Brain natriuretic peptide (138 aa).

Residues 1-22 (MRLSSMWLCSLLLILKLQLSST) form the signal peptide. Disordered regions lie at residues 50 to 84 (EQMA…AGLD) and 99 to 138 (SVRN…PKQR). A disulfide bridge links Cys111 with Cys127.

This sequence belongs to the natriuretic peptide family.

It is found in the secreted. Cardiac hormone which may function as a paracrine antifibrotic factor in the heart. Also plays a key role in cardiovascular homeostasis through natriuresis, diuresis, vasorelaxation, and inhibition of renin and aldosterone secretion. This chain is Brain natriuretic peptide (nppb), found in Oreochromis mossambicus (Mozambique tilapia).